The chain runs to 259 residues: 1,2-dihydroxy-1,2-dihydronaphthalene dehydrogenase (259 aa).

NAD(+)-binding positions include 8 to 35 (AITG…SALV) and Asp-58. Ser-140 is a substrate binding site. The active-site Proton acceptor is Tyr-153. Residue Lys-157 coordinates NAD(+).

The protein belongs to the short-chain dehydrogenases/reductases (SDR) family.

It carries out the reaction (1R,2S)-1,2-dihydronaphthalene-1,2-diol + NAD(+) = naphthalene-1,2-diol + NADH + H(+). The protein operates within aromatic compound metabolism; naphthalene degradation. Its function is as follows. Catalyzes the oxidation of naphthalene dihydrodiol into 1,2-dihydroxynaphthalene. This chain is 1,2-dihydroxy-1,2-dihydronaphthalene dehydrogenase, found in Ralstonia sp.